The sequence spans 218 residues: Pyridoxine/pyridoxamine 5'-phosphate oxidase (218 aa).

Residues 14-17 (RREY) and Lys-72 contribute to the substrate site. Residues 67–72 (RIVLLK), 82–83 (YT), Arg-88, Lys-89, and Gln-111 contribute to the FMN site. Substrate-binding residues include Tyr-129, Arg-133, and Ser-137. Residues 146–147 (QS) and Trp-191 contribute to the FMN site. 197–199 (RLH) is a binding site for substrate. Residue Arg-201 participates in FMN binding.

It belongs to the pyridoxamine 5'-phosphate oxidase family. As to quaternary structure, homodimer. Requires FMN as cofactor.

The catalysed reaction is pyridoxamine 5'-phosphate + O2 + H2O = pyridoxal 5'-phosphate + H2O2 + NH4(+). It catalyses the reaction pyridoxine 5'-phosphate + O2 = pyridoxal 5'-phosphate + H2O2. It functions in the pathway cofactor metabolism; pyridoxal 5'-phosphate salvage; pyridoxal 5'-phosphate from pyridoxamine 5'-phosphate: step 1/1. It participates in cofactor metabolism; pyridoxal 5'-phosphate salvage; pyridoxal 5'-phosphate from pyridoxine 5'-phosphate: step 1/1. Catalyzes the oxidation of either pyridoxine 5'-phosphate (PNP) or pyridoxamine 5'-phosphate (PMP) into pyridoxal 5'-phosphate (PLP). The protein is Pyridoxine/pyridoxamine 5'-phosphate oxidase of Escherichia coli O7:K1 (strain IAI39 / ExPEC).